The chain runs to 409 residues: Elongation factor Tu, chloroplastic (409 aa).

Positions 10-214 constitute a tr-type G domain; it reads KPHINIGTIG…AVDAYIPTPE (205 aa). A G1 region spans residues 19-26; it reads GHVDHGKT. 19 to 26 lines the GTP pocket; sequence GHVDHGKT. T26 provides a ligand contact to Mg(2+). The tract at residues 60–64 is G2; it reads GITIN. The G3 stretch occupies residues 81–84; it reads DCPG. GTP contacts are provided by residues 81–85 and 136–139; these read DCPGH and NKQD. Residues 136 to 139 are G4; that stretch reads NKQD. The segment at 174–176 is G5; sequence SRL.

The protein belongs to the TRAFAC class translation factor GTPase superfamily. Classic translation factor GTPase family. EF-Tu/EF-1A subfamily.

It localises to the plastid. The protein localises to the chloroplast. It carries out the reaction GTP + H2O = GDP + phosphate + H(+). Functionally, GTP hydrolase that promotes the GTP-dependent binding of aminoacyl-tRNA to the A-site of ribosomes during protein biosynthesis. The protein is Elongation factor Tu, chloroplastic (tufA) of Stephanocyclus meneghinianus (Diatom).